Here is a 121-residue protein sequence, read N- to C-terminus: Large ribosomal subunit protein bL20 (121 aa).

It belongs to the bacterial ribosomal protein bL20 family.

Functionally, binds directly to 23S ribosomal RNA and is necessary for the in vitro assembly process of the 50S ribosomal subunit. It is not involved in the protein synthesizing functions of that subunit. In Koribacter versatilis (strain Ellin345), this protein is Large ribosomal subunit protein bL20.